The chain runs to 347 residues: NADH-ubiquinone oxidoreductase chain 2 (347 aa).

Transmembrane regions (helical) follow at residues 1–21, 25–45, 59–79, 96–116, 123–143, 153–173, 178–198, 200–220, 239–259, 278–298, and 325–345; these read MNPL…IITM, HWLT…PLIM, YFLI…INFM, TIIL…FWVP, LLST…SILY, IILA…LNQT, IMAY…IYNP, LMLL…TILI, ILMM…PLSG, ISLT…RLIY, and FLPT…MMFI.

The protein belongs to the complex I subunit 2 family. As to quaternary structure, core subunit of respiratory chain NADH dehydrogenase (Complex I) which is composed of 45 different subunits. Interacts with TMEM242.

It localises to the mitochondrion inner membrane. It carries out the reaction a ubiquinone + NADH + 5 H(+)(in) = a ubiquinol + NAD(+) + 4 H(+)(out). Core subunit of the mitochondrial membrane respiratory chain NADH dehydrogenase (Complex I) that is believed to belong to the minimal assembly required for catalysis. Complex I functions in the transfer of electrons from NADH to the respiratory chain. The immediate electron acceptor for the enzyme is believed to be ubiquinone. The polypeptide is NADH-ubiquinone oxidoreductase chain 2 (Oryzorictes hova (Hova rice tenrec)).